The sequence spans 430 residues: KIN17-like protein (430 aa).

The segment at 28–50 adopts a C2H2-type zinc-finger fold; sequence CQMCQKQCRDENGFKCHCMSESH. The winged helix-turn-helix (wHTH) stretch occupies residues 51 to 160; it reads QRQMQVFGQA…KARLKRKRIK (110 aa). Residues 147 to 183 adopt a coiled-coil conformation; it reads EQAVKARLKRKRIKSDLAEDERQERMIARQIERAQQS. Residues 155–158 carry the Nuclear localization signal (NLS) motif; sequence KRKR. 2 disordered regions span residues 179-230 and 261-284; these read RAQQ…ANKA and EEED…GKDA. The segment covering 191–224 has biased composition (acidic residues); sequence LGDDASPDGSEGESGSEDEYSDSENDHEGQEEDA. Positions 261–278 are enriched in basic and acidic residues; the sequence is EEEDEVSARDKEKEELAK. Positions 283-312 form a coiled coil; it reads DAINAAEARRSALDELMKEEEKAKERSNRK. Positions 319 to 370 are C-terminal subdomain A; it reads GIVVKVMSKSLAEKGYCKQKGVVKRVIDKYVGEIEMLESKHVLRVDQDELET. The segment at 376–427 is C-terminal subdomain B; that stretch reads GGLVRIVNGAYRGSNARLLSVDTERFCAKVQVEKGLYDGKVLKAIEYEDICK.

The protein belongs to the KIN17 family.

It localises to the nucleus. This chain is KIN17-like protein, found in Oryza sativa subsp. japonica (Rice).